The chain runs to 268 residues: Ribosomal RNA small subunit methyltransferase A (268 aa).

S-adenosyl-L-methionine-binding residues include Asn-19, Leu-21, Gly-46, Glu-67, Asp-92, and Asn-113.

Belongs to the class I-like SAM-binding methyltransferase superfamily. rRNA adenine N(6)-methyltransferase family. RsmA subfamily.

The protein localises to the cytoplasm. The enzyme catalyses adenosine(1518)/adenosine(1519) in 16S rRNA + 4 S-adenosyl-L-methionine = N(6)-dimethyladenosine(1518)/N(6)-dimethyladenosine(1519) in 16S rRNA + 4 S-adenosyl-L-homocysteine + 4 H(+). Specifically dimethylates two adjacent adenosines (A1518 and A1519) in the loop of a conserved hairpin near the 3'-end of 16S rRNA in the 30S particle. May play a critical role in biogenesis of 30S subunits. The chain is Ribosomal RNA small subunit methyltransferase A from Tolumonas auensis (strain DSM 9187 / NBRC 110442 / TA 4).